The following is a 278-amino-acid chain: Large ribosomal subunit protein uL2 (278 aa).

Disordered stretches follow at residues leucine 33–glycine 53 and leucine 219–arginine 278. Over residues isoleucine 269–arginine 278 the composition is skewed to basic residues.

This sequence belongs to the universal ribosomal protein uL2 family. In terms of assembly, part of the 50S ribosomal subunit. Forms a bridge to the 30S subunit in the 70S ribosome.

Functionally, one of the primary rRNA binding proteins. Required for association of the 30S and 50S subunits to form the 70S ribosome, for tRNA binding and peptide bond formation. It has been suggested to have peptidyltransferase activity; this is somewhat controversial. Makes several contacts with the 16S rRNA in the 70S ribosome. In Sphingopyxis alaskensis (strain DSM 13593 / LMG 18877 / RB2256) (Sphingomonas alaskensis), this protein is Large ribosomal subunit protein uL2.